A 94-amino-acid chain; its full sequence is Co-chaperonin GroES (94 aa).

The protein belongs to the GroES chaperonin family. In terms of assembly, heptamer of 7 subunits arranged in a ring. Interacts with the chaperonin GroEL.

The protein localises to the cytoplasm. Its function is as follows. Together with the chaperonin GroEL, plays an essential role in assisting protein folding. The GroEL-GroES system forms a nano-cage that allows encapsulation of the non-native substrate proteins and provides a physical environment optimized to promote and accelerate protein folding. GroES binds to the apical surface of the GroEL ring, thereby capping the opening of the GroEL channel. This Geobacillus stearothermophilus (Bacillus stearothermophilus) protein is Co-chaperonin GroES.